The sequence spans 595 residues: L-allo-isoleucine:holo-[CmaA peptidyl-carrier protein] ligase (595 aa).

In terms of domain architecture, Carrier spans 507 to 582 (VVSPQAGSAV…EWVQYYATHA (76 aa)). An O-(pantetheine 4'-phosphoryl)serine modification is found at Ser542.

This sequence belongs to the ATP-dependent AMP-binding enzyme family. In terms of assembly, homodimer. It depends on pantetheine 4'-phosphate as a cofactor.

The enzyme catalyses L-alloisoleucine + holo-[CmaA peptidyl-carrier protein] + ATP = L-alloisoleucyl-[CmaA peptidyl-carrier protein] + AMP + diphosphate. Its function is as follows. Involved in the biosynthesis of the phytotoxin coronatine (COR) which mimics the plant hormone jasmonic acid isoleucine and promotes opening of stomata for bacterial entry, bacterial growth in the apoplast, systemic susceptibility, and disease symptoms. CmaA catalyzes the adenylation of L-allo-isoleucine (via the A domain) and the attachment of L-allo-isoleucine to the 4'-phosphopantetheine arm located within the T domain of CmaA. It can also use L-isoleucine, L-leucine and L-valine as substrates. The sequence is that of L-allo-isoleucine:holo-[CmaA peptidyl-carrier protein] ligase from Pseudomonas savastanoi pv. glycinea (Pseudomonas syringae pv. glycinea).